A 619-amino-acid chain; its full sequence is Schlafen family member 12-like (619 aa).

Residues 598–618 (IFLFVCLFRFCLFVCLFVFFL) form a helical membrane-spanning segment.

Belongs to the Schlafen family.

The protein resides in the membrane. In Pongo abelii (Sumatran orangutan), this protein is Schlafen family member 12-like (SLFN12L).